Reading from the N-terminus, the 393-residue chain is NAD(P)H-quinone oxidoreductase subunit H, chloroplastic (393 aa).

It belongs to the complex I 49 kDa subunit family. In terms of assembly, NDH is composed of at least 16 different subunits, 5 of which are encoded in the nucleus.

It is found in the plastid. Its subcellular location is the chloroplast thylakoid membrane. It carries out the reaction a plastoquinone + NADH + (n+1) H(+)(in) = a plastoquinol + NAD(+) + n H(+)(out). The enzyme catalyses a plastoquinone + NADPH + (n+1) H(+)(in) = a plastoquinol + NADP(+) + n H(+)(out). Functionally, NDH shuttles electrons from NAD(P)H:plastoquinone, via FMN and iron-sulfur (Fe-S) centers, to quinones in the photosynthetic chain and possibly in a chloroplast respiratory chain. The immediate electron acceptor for the enzyme in this species is believed to be plastoquinone. Couples the redox reaction to proton translocation, and thus conserves the redox energy in a proton gradient. The polypeptide is NAD(P)H-quinone oxidoreductase subunit H, chloroplastic (Amborella trichopoda).